A 378-amino-acid chain; its full sequence is MAFSKRVYRSLPFELVEEILKKTPAESLNRFKSTCKQWYGIITSKRFMYNHLDHSPERFIRIDDHKTVQIMDPMTGIFSDSPVPDVFRSPHSFASMVHCDGLMLCICSDSSYERTREANLAVWNPVTKKIKWIEPLDSYYETDYFGIGYDNTCRENYKIVRFSGPMSFDDTECEIYEFKSDSWRTLDTKYWDVYTQCRGVSVKGNMYWIADTKEKFILRFDFSMETFKNVCVCPPIGCTGRLGCFSGDRLPLLLQDTDFGGEEEVSTDIAVWLTNKLSDEVVSFTKYFNVTSPHLPLLQCHGDMARPGYFIGDHKNILAWCEGEVEEDDKWYTCITLYQIDQCGIRKQIETGRHRSFRYLDPFICSYVYVPSLIPVPE.

An F-box domain is found at lysine 5–leucine 52.

This Arabidopsis thaliana (Mouse-ear cress) protein is Putative F-box only protein 15 (FBX15).